The chain runs to 347 residues: Ion-translocating oxidoreductase complex subunit D (347 aa).

The next 4 helical transmembrane spans lie at 15-35 (IMFLVIVACLPGIFAKYYFFG), 36-56 (IGTLIQIFFSIFISLVLEIII), 84-104 (IPPLLPWWMTSIGLFFAIVVA), and 114-134 (NIFNPAMVGYAVLLISFPVYM). Thr182 bears the FMN phosphoryl threonine mark. The next 5 helical transmembrane spans lie at 217-237 (CINISFFLGGIFLLFTKIICW), 239-259 (IPISFLSSLGMLSIITYFYSK), 261-281 (LFMSPQVHFFSGGTMICAFFI), 289-309 (ACNNVGKIVFGIIIGFLVWII), and 315-335 (YPDAIAFSVLFANMTVPLVDY).

This sequence belongs to the NqrB/RnfD family. The complex is composed of six subunits: RnfA, RnfB, RnfC, RnfD, RnfE and RnfG. It depends on FMN as a cofactor.

It is found in the cell inner membrane. In terms of biological role, part of a membrane-bound complex that couples electron transfer with translocation of ions across the membrane. This Buchnera aphidicola subsp. Acyrthosiphon pisum (strain 5A) protein is Ion-translocating oxidoreductase complex subunit D.